The following is a 29-amino-acid chain: Neurotoxin BmK A3-6 (29 aa).

Contains 3 disulfide bonds. In terms of tissue distribution, expressed by the venom gland.

Its subcellular location is the secreted. The polypeptide is Neurotoxin BmK A3-6 (Olivierus martensii (Manchurian scorpion)).